A 405-amino-acid chain; its full sequence is Aspartokinase (405 aa).

ACT domains are found at residues V267 to S344 and I345 to Q405.

The protein belongs to the aspartokinase family.

The enzyme catalyses L-aspartate + ATP = 4-phospho-L-aspartate + ADP. It participates in amino-acid biosynthesis; L-lysine biosynthesis via DAP pathway; (S)-tetrahydrodipicolinate from L-aspartate: step 1/4. The protein operates within amino-acid biosynthesis; L-methionine biosynthesis via de novo pathway; L-homoserine from L-aspartate: step 1/3. It functions in the pathway amino-acid biosynthesis; L-threonine biosynthesis; L-threonine from L-aspartate: step 1/5. The chain is Aspartokinase (lysC) from Helicobacter pylori (strain ATCC 700392 / 26695) (Campylobacter pylori).